The following is a 412-amino-acid chain: Serine hydroxymethyltransferase (412 aa).

(6S)-5,6,7,8-tetrahydrofolate contacts are provided by residues Leu117 and 121–123 (GHL). An N6-(pyridoxal phosphate)lysine modification is found at Lys226. Residues Glu242 and 350 to 352 (SPF) each bind (6S)-5,6,7,8-tetrahydrofolate.

The protein belongs to the SHMT family. Homodimer. Pyridoxal 5'-phosphate is required as a cofactor.

It is found in the cytoplasm. The catalysed reaction is (6R)-5,10-methylene-5,6,7,8-tetrahydrofolate + glycine + H2O = (6S)-5,6,7,8-tetrahydrofolate + L-serine. It participates in one-carbon metabolism; tetrahydrofolate interconversion. Its pathway is amino-acid biosynthesis; glycine biosynthesis; glycine from L-serine: step 1/1. Catalyzes the reversible interconversion of serine and glycine with tetrahydrofolate (THF) serving as the one-carbon carrier. Also exhibits THF-independent aldolase activity toward beta-hydroxyamino acids, producing glycine and aldehydes, via a retro-aldol mechanism. In Methanosarcina mazei (strain ATCC BAA-159 / DSM 3647 / Goe1 / Go1 / JCM 11833 / OCM 88) (Methanosarcina frisia), this protein is Serine hydroxymethyltransferase.